We begin with the raw amino-acid sequence, 228 residues long: MKISFHGQSCIKIITGDTTILVDPFISGNDKCDLKAEEQMPDFIVLSHGHDDHVGDTVEIAKNSGATVICNADLASFLAVEDGLENIAPMHIGGKRQFSFGQVKLTQAFHGSQTVRDGRIVNLGFPTGIVFTIEDKNIYFAGDTGLFSDMKLIGELNPLDVAFLPIGDNFTMGPEDAAIAARFLQAKLVVPMHYNTFPLIAQDPHKFVASLDEGITGKVLEIGEGIEI.

It belongs to the UPF0173 family.

In Listeria monocytogenes serotype 4b (strain F2365), this protein is UPF0173 metal-dependent hydrolase LMOf2365_1599.